Consider the following 342-residue polypeptide: MRIKTRNFIMQTQQILTQLFDNQPLSQEQAAFIFGNIVKGELSNEQLAGALIALKIRGETIDEITGAVTALLAAAEPFPAPDYPFADIVGTGGDNADTINISTASAIVAASMGLKIAKHGNRSVSSKTGASDVLTALGVNIRMSTEQARKALDEIGIAFIFAQQYHLGFKYAGPVRQALKTRTIFNILGPLINPANPKRQLLGVYSPELLKPYAETNLRLNHEHSIIVHGCGLDEVAIHGLTQVAELRDGKIEYYNLSPKDFGFEPQPLESLRGGAPEENAKILTALLQGKGSEQQAQAVAMNTALLMKLFGHEDIKQNAQQVLEQLTTGKAFETLTKLTTY.

Residues Gly-90, 93–94, Thr-98, 100–103, 118–126, and Ala-130 each bind 5-phospho-alpha-D-ribose 1-diphosphate; these read GD, NIST, and KHGNRSVSS. Residue Gly-90 coordinates anthranilate. Mg(2+) is bound at residue Ser-102. Asn-121 serves as a coordination point for anthranilate. Arg-176 serves as a coordination point for anthranilate. Asp-234 and Glu-235 together coordinate Mg(2+).

Belongs to the anthranilate phosphoribosyltransferase family. Homodimer. Mg(2+) serves as cofactor.

The enzyme catalyses N-(5-phospho-beta-D-ribosyl)anthranilate + diphosphate = 5-phospho-alpha-D-ribose 1-diphosphate + anthranilate. It participates in amino-acid biosynthesis; L-tryptophan biosynthesis; L-tryptophan from chorismate: step 2/5. Its function is as follows. Catalyzes the transfer of the phosphoribosyl group of 5-phosphorylribose-1-pyrophosphate (PRPP) to anthranilate to yield N-(5'-phosphoribosyl)-anthranilate (PRA). The polypeptide is Anthranilate phosphoribosyltransferase (Mannheimia succiniciproducens (strain KCTC 0769BP / MBEL55E)).